An 83-amino-acid chain; its full sequence is Small ribosomal subunit protein bS20 (83 aa).

Basic residues predominate over residues 1 to 11; it reads MANHKSAAKRA. Positions 1 to 44 are disordered; that stretch reads MANHKSAAKRAKQSEARRLRNKSTRSSMNTAVKKVRTAKEAGTD.

Belongs to the bacterial ribosomal protein bS20 family.

Its function is as follows. Binds directly to 16S ribosomal RNA. The sequence is that of Small ribosomal subunit protein bS20 from Desulforapulum autotrophicum (strain ATCC 43914 / DSM 3382 / VKM B-1955 / HRM2) (Desulfobacterium autotrophicum).